Reading from the N-terminus, the 183-residue chain is dCTP deaminase (183 aa).

Residues 97–102 (RSSFAR) and Asp-113 contribute to the dCTP site. The active-site Proton donor/acceptor is the Glu-123. DCTP contacts are provided by Tyr-155 and Gln-162.

This sequence belongs to the dCTP deaminase family. Homotrimer.

The enzyme catalyses dCTP + H2O + H(+) = dUTP + NH4(+). It functions in the pathway pyrimidine metabolism; dUMP biosynthesis; dUMP from dCTP (dUTP route): step 1/2. Functionally, catalyzes the deamination of dCTP to dUTP. The polypeptide is dCTP deaminase (Sulfurisphaera tokodaii (strain DSM 16993 / JCM 10545 / NBRC 100140 / 7) (Sulfolobus tokodaii)).